Consider the following 400-residue polypeptide: tRNA-specific 2-thiouridylase MnmA (400 aa).

ATP-binding positions include 19 to 26 (AMSGGVDS) and Leu-45. Cys-113 (nucleophile) is an active-site residue. A disulfide bridge links Cys-113 with Cys-210. Gly-137 lines the ATP pocket. Positions 160-162 (RDQ) are interaction with tRNA. Cys-210 acts as the Cysteine persulfide intermediate in catalysis.

This sequence belongs to the MnmA/TRMU family.

The protein localises to the cytoplasm. It catalyses the reaction S-sulfanyl-L-cysteinyl-[protein] + uridine(34) in tRNA + AH2 + ATP = 2-thiouridine(34) in tRNA + L-cysteinyl-[protein] + A + AMP + diphosphate + H(+). In terms of biological role, catalyzes the 2-thiolation of uridine at the wobble position (U34) of tRNA, leading to the formation of s(2)U34. The sequence is that of tRNA-specific 2-thiouridylase MnmA from Nitrobacter hamburgensis (strain DSM 10229 / NCIMB 13809 / X14).